A 123-amino-acid chain; its full sequence is Guanine nucleotide exchange factor MSS4 (123 aa).

Methionine 1 carries the post-translational modification N-acetylmethionine. In terms of domain architecture, MSS4 spans 9 to 123 (ELVSAEGRNR…YVALERVSHE (115 aa)). The Zn(2+) site is built by cysteine 23, cysteine 26, cysteine 94, and cysteine 97.

Belongs to the DSS4/MSS4 family. As to quaternary structure, interacts with RAB8A. In terms of tissue distribution, ubiquitous.

In terms of biological role, guanine-nucleotide-releasing protein that acts on members of the SEC4/YPT1/RAB subfamily. Stimulates GDP release from both YPT1, RAB3A and RAB10, but is less active on these proteins than on the SEC4 protein. Might play a general role in vesicular transport. The protein is Guanine nucleotide exchange factor MSS4 (RABIF) of Homo sapiens (Human).